We begin with the raw amino-acid sequence, 375 residues long: Aminomethyltransferase (375 aa).

It belongs to the GcvT family. As to quaternary structure, the glycine cleavage system is composed of four proteins: P, T, L and H.

It carries out the reaction N(6)-[(R)-S(8)-aminomethyldihydrolipoyl]-L-lysyl-[protein] + (6S)-5,6,7,8-tetrahydrofolate = N(6)-[(R)-dihydrolipoyl]-L-lysyl-[protein] + (6R)-5,10-methylene-5,6,7,8-tetrahydrofolate + NH4(+). The glycine cleavage system catalyzes the degradation of glycine. This chain is Aminomethyltransferase, found in Cupriavidus necator (strain ATCC 17699 / DSM 428 / KCTC 22496 / NCIMB 10442 / H16 / Stanier 337) (Ralstonia eutropha).